A 45-amino-acid chain; its full sequence is Bacteriocin fulvocin-C (45 aa).

Bacteriocin. The sequence is that of Bacteriocin fulvocin-C from Myxococcus fulvus.